We begin with the raw amino-acid sequence, 655 residues long: Putative phagocytic receptor 1c (655 aa).

The signal sequence occupies residues 1-20 (MLNIIVVLLLLFFSNNVIDS). Residues 146 to 173 (SNSKSSEITSPPSSPSSSSSSSSSPSSS) are compositionally biased toward low complexity. The interval 146 to 185 (SNSKSSEITSPPSSPSSSSSSSSSPSSSIEEEDDDDTEND) is disordered. Positions 174-183 (IEEEDDDDTE) are enriched in acidic residues. The next 9 membrane-spanning stretches (helical) occupy residues 300–320 (IDII…AIIL), 359–379 (FSII…LMVF), 387–407 (IATP…TGIF), 428–448 (SVIT…IGYF), 461–481 (IGTV…CSLL), 518–538 (MILG…FFLS), 550–570 (LSFA…NMII), 587–607 (LLGP…FGIT), and 619–639 (FMFS…IGFL).

It belongs to the nonaspanin (TM9SF) (TC 9.A.2) family.

It localises to the membrane. In Dictyostelium discoideum (Social amoeba), this protein is Putative phagocytic receptor 1c (phg1c).